The primary structure comprises 297 residues: Putative F-box protein At2g19630 (297 aa).

Positions 11-60 (TKNSLQIPIDLIIEIFLRLSVNSIARCRCVSKQWASTLSRPYFTELFLTR) constitute an F-box domain.

In Arabidopsis thaliana (Mouse-ear cress), this protein is Putative F-box protein At2g19630.